The primary structure comprises 236 residues: MTRRYWNINLEEMMEAGVHFGHGTRKWNPRMAPYISAKRKGIHITNLTRTARFLSEACDLVFDAASRGKQFLIVGTKNKAADSVASAAIRARCHYVNKKWLGGMSTNWSTTETRLHKFRDLRAEQKTGRFNRLPKRDAAMLKRQLSHLQTYLGGIKYMTGLPDIVIIVDQQEEYTALRECVTLGIPTICLIDTNCDPDLADISIPANDDAIASIRFILNKLVSAICEGRSSYIRNR.

Belongs to the universal ribosomal protein uS2 family.

It localises to the plastid. It is found in the chloroplast. This is Small ribosomal subunit protein uS2c (rps2) from Nandina domestica (Heavenly bamboo).